The primary structure comprises 250 residues: MQNKNKTVVKSMALLNLFLHKPSLTLSELVSLTGMPKTSVHRMVSSLEEMGFLSRDASGAYSLGLVFLEFGQLVADRLDIRKIAKPVMEELCREVDEAVQLIMRDGNEAIYVEKIEGTQTVRLYTAIGRRSPLYAGACARSILSFLPREEIEAYIKQTELISIGSGTITDPEKLLQEIDASVQNGYTVSYSELENYTAAIGAPIFNHERQVAAGISIAGFEARFTEDRLPYLTEKVKDAALQISRKIGYT.

In terms of domain architecture, HTH iclR-type spans N5–L65. The segment at residues L26–S45 is a DNA-binding region (H-T-H motif). The 170-residue stretch at I80 to Y249 folds into the IclR-ED domain.

Functionally, transcriptional repressor of the kip gene-containing operon. This chain is HTH-type transcriptional regulator KipR (kipR), found in Bacillus subtilis (strain 168).